The primary structure comprises 356 residues: Glycerol-1-phosphate dehydrogenase [NAD(P)+] (356 aa).

NAD(+) contacts are provided by residues 103-107 (GRSID) and 125-128 (TAAS). Residue Asp-130 coordinates substrate. Ser-134 is an NAD(+) binding site. Asp-177 is a binding site for substrate. Zn(2+) contacts are provided by Asp-177 and His-257. His-261 is a binding site for substrate. His-273 contacts Zn(2+).

It belongs to the glycerol-1-phosphate dehydrogenase family. Zn(2+) is required as a cofactor.

The protein localises to the cytoplasm. It catalyses the reaction sn-glycerol 1-phosphate + NAD(+) = dihydroxyacetone phosphate + NADH + H(+). The catalysed reaction is sn-glycerol 1-phosphate + NADP(+) = dihydroxyacetone phosphate + NADPH + H(+). It functions in the pathway membrane lipid metabolism; glycerophospholipid metabolism. Its function is as follows. Catalyzes the NAD(P)H-dependent reduction of dihydroxyacetonephosphate (DHAP or glycerone phosphate) to glycerol 1-phosphate (G1P). The G1P thus generated is used as the glycerophosphate backbone of phospholipids in the cellular membranes of Archaea. The sequence is that of Glycerol-1-phosphate dehydrogenase [NAD(P)+] from Methanosarcina acetivorans (strain ATCC 35395 / DSM 2834 / JCM 12185 / C2A).